Reading from the N-terminus, the 486-residue chain is ATP synthase subunit beta (486 aa).

164-171 (GGAGVGKT) serves as a coordination point for ATP.

This sequence belongs to the ATPase alpha/beta chains family. In terms of assembly, F-type ATPases have 2 components, CF(1) - the catalytic core - and CF(0) - the membrane proton channel. CF(1) has five subunits: alpha(3), beta(3), gamma(1), delta(1), epsilon(1). CF(0) has four main subunits: a(1), b(1), b'(1) and c(9-12).

It is found in the cellular thylakoid membrane. It carries out the reaction ATP + H2O + 4 H(+)(in) = ADP + phosphate + 5 H(+)(out). Functionally, produces ATP from ADP in the presence of a proton gradient across the membrane. The catalytic sites are hosted primarily by the beta subunits. The polypeptide is ATP synthase subunit beta (Prochlorococcus marinus (strain MIT 9301)).